The primary structure comprises 379 residues: tRNA-specific 2-thiouridylase MnmA (379 aa).

Residues A9–S16 and M35 contribute to the ATP site. The tract at residues N94–D96 is interaction with target base in tRNA. C99 acts as the Nucleophile in catalysis. The cysteines at positions 99 and 195 are disulfide-linked. G123 is a binding site for ATP. The interaction with tRNA stretch occupies residues K145–Q147. C195 (cysteine persulfide intermediate) is an active-site residue. The interaction with tRNA stretch occupies residues R307–Y308.

It belongs to the MnmA/TRMU family.

It localises to the cytoplasm. It catalyses the reaction S-sulfanyl-L-cysteinyl-[protein] + uridine(34) in tRNA + AH2 + ATP = 2-thiouridine(34) in tRNA + L-cysteinyl-[protein] + A + AMP + diphosphate + H(+). Catalyzes the 2-thiolation of uridine at the wobble position (U34) of tRNA, leading to the formation of s(2)U34. In Xylella fastidiosa (strain 9a5c), this protein is tRNA-specific 2-thiouridylase MnmA.